The following is a 106-amino-acid chain: Large ribosomal subunit protein uL24 (106 aa).

The protein belongs to the universal ribosomal protein uL24 family. Part of the 50S ribosomal subunit.

In terms of biological role, one of two assembly initiator proteins, it binds directly to the 5'-end of the 23S rRNA, where it nucleates assembly of the 50S subunit. Functionally, one of the proteins that surrounds the polypeptide exit tunnel on the outside of the subunit. This is Large ribosomal subunit protein uL24 from Porphyromonas gingivalis (strain ATCC 33277 / DSM 20709 / CIP 103683 / JCM 12257 / NCTC 11834 / 2561).